The sequence spans 342 residues: Holliday junction branch migration complex subunit RuvB (342 aa).

The interval 1-21 is disordered; the sequence is MSVEHSPVDPSAEPPEKAEEA. Residues 1–184 are large ATPase domain (RuvB-L); the sequence is MSVEHSPVDP…FGFTAQLDYY (184 aa). Residues leucine 23, arginine 24, glycine 65, lysine 68, threonine 69, threonine 70, 131-133, arginine 174, tyrosine 184, and arginine 221 each bind ATP; that span reads EDF. Threonine 69 lines the Mg(2+) pocket. The tract at residues 185–255 is small ATPAse domain (RuvB-S); it reads EVADLERIVT…GAETALDLYE (71 aa). A head domain (RuvB-H) region spans residues 258-342; sequence PLGLDRLDRA…PPDSSGEGLF (85 aa). DNA-binding residues include arginine 313 and arginine 318.

It belongs to the RuvB family. Homohexamer. Forms an RuvA(8)-RuvB(12)-Holliday junction (HJ) complex. HJ DNA is sandwiched between 2 RuvA tetramers; dsDNA enters through RuvA and exits via RuvB. An RuvB hexamer assembles on each DNA strand where it exits the tetramer. Each RuvB hexamer is contacted by two RuvA subunits (via domain III) on 2 adjacent RuvB subunits; this complex drives branch migration. In the full resolvosome a probable DNA-RuvA(4)-RuvB(12)-RuvC(2) complex forms which resolves the HJ.

Its subcellular location is the cytoplasm. The enzyme catalyses ATP + H2O = ADP + phosphate + H(+). Its function is as follows. The RuvA-RuvB-RuvC complex processes Holliday junction (HJ) DNA during genetic recombination and DNA repair, while the RuvA-RuvB complex plays an important role in the rescue of blocked DNA replication forks via replication fork reversal (RFR). RuvA specifically binds to HJ cruciform DNA, conferring on it an open structure. The RuvB hexamer acts as an ATP-dependent pump, pulling dsDNA into and through the RuvAB complex. RuvB forms 2 homohexamers on either side of HJ DNA bound by 1 or 2 RuvA tetramers; 4 subunits per hexamer contact DNA at a time. Coordinated motions by a converter formed by DNA-disengaged RuvB subunits stimulates ATP hydrolysis and nucleotide exchange. Immobilization of the converter enables RuvB to convert the ATP-contained energy into a lever motion, pulling 2 nucleotides of DNA out of the RuvA tetramer per ATP hydrolyzed, thus driving DNA branch migration. The RuvB motors rotate together with the DNA substrate, which together with the progressing nucleotide cycle form the mechanistic basis for DNA recombination by continuous HJ branch migration. Branch migration allows RuvC to scan DNA until it finds its consensus sequence, where it cleaves and resolves cruciform DNA. The sequence is that of Holliday junction branch migration complex subunit RuvB from Cutibacterium acnes (strain DSM 16379 / KPA171202) (Propionibacterium acnes).